A 216-amino-acid polypeptide reads, in one-letter code: Pyridoxine/pyridoxamine 5'-phosphate oxidase (216 aa).

Residues 63–68 (RMVLMK), 78–79 (YS), lysine 85, and glutamine 107 each bind FMN. A substrate-binding site is contributed by lysine 68. 2 residues coordinate substrate: tyrosine 125 and arginine 129. FMN-binding positions include 142–143 (QS) and tryptophan 187. 193-195 (RLH) is a substrate binding site. Residue arginine 197 coordinates FMN.

This sequence belongs to the pyridoxamine 5'-phosphate oxidase family. In terms of assembly, homodimer. The cofactor is FMN.

The enzyme catalyses pyridoxamine 5'-phosphate + O2 + H2O = pyridoxal 5'-phosphate + H2O2 + NH4(+). It carries out the reaction pyridoxine 5'-phosphate + O2 = pyridoxal 5'-phosphate + H2O2. It participates in cofactor metabolism; pyridoxal 5'-phosphate salvage; pyridoxal 5'-phosphate from pyridoxamine 5'-phosphate: step 1/1. It functions in the pathway cofactor metabolism; pyridoxal 5'-phosphate salvage; pyridoxal 5'-phosphate from pyridoxine 5'-phosphate: step 1/1. Functionally, catalyzes the oxidation of either pyridoxine 5'-phosphate (PNP) or pyridoxamine 5'-phosphate (PMP) into pyridoxal 5'-phosphate (PLP). This is Pyridoxine/pyridoxamine 5'-phosphate oxidase from Bradyrhizobium sp. (strain BTAi1 / ATCC BAA-1182).